The primary structure comprises 133 residues: Transcription antitermination protein NusB (133 aa).

Belongs to the NusB family.

Functionally, involved in transcription antitermination. Required for transcription of ribosomal RNA (rRNA) genes. Binds specifically to the boxA antiterminator sequence of the ribosomal RNA (rrn) operons. In Clostridium botulinum (strain Alaska E43 / Type E3), this protein is Transcription antitermination protein NusB.